The sequence spans 464 residues: ATP synthase subunit beta (464 aa).

151-158 (GGAGVGKT) provides a ligand contact to ATP.

Belongs to the ATPase alpha/beta chains family. F-type ATPases have 2 components, CF(1) - the catalytic core - and CF(0) - the membrane proton channel. CF(1) has five subunits: alpha(3), beta(3), gamma(1), delta(1), epsilon(1). CF(0) has three main subunits: a(1), b(2) and c(9-12). The alpha and beta chains form an alternating ring which encloses part of the gamma chain. CF(1) is attached to CF(0) by a central stalk formed by the gamma and epsilon chains, while a peripheral stalk is formed by the delta and b chains.

It localises to the cell membrane. The catalysed reaction is ATP + H2O + 4 H(+)(in) = ADP + phosphate + 5 H(+)(out). Functionally, produces ATP from ADP in the presence of a proton gradient across the membrane. The catalytic sites are hosted primarily by the beta subunits. In Bacillus cytotoxicus (strain DSM 22905 / CIP 110041 / 391-98 / NVH 391-98), this protein is ATP synthase subunit beta.